The following is a 155-amino-acid chain: D-aminoacyl-tRNA deacylase (155 aa).

The Gly-cisPro motif, important for rejection of L-amino acids signature appears at 137-138 (GP).

This sequence belongs to the DTD family. Homodimer.

Its subcellular location is the cytoplasm. It carries out the reaction glycyl-tRNA(Ala) + H2O = tRNA(Ala) + glycine + H(+). The enzyme catalyses a D-aminoacyl-tRNA + H2O = a tRNA + a D-alpha-amino acid + H(+). Functionally, an aminoacyl-tRNA editing enzyme that deacylates mischarged D-aminoacyl-tRNAs. Also deacylates mischarged glycyl-tRNA(Ala), protecting cells against glycine mischarging by AlaRS. Acts via tRNA-based rather than protein-based catalysis; rejects L-amino acids rather than detecting D-amino acids in the active site. By recycling D-aminoacyl-tRNA to D-amino acids and free tRNA molecules, this enzyme counteracts the toxicity associated with the formation of D-aminoacyl-tRNA entities in vivo and helps enforce protein L-homochirality. The sequence is that of D-aminoacyl-tRNA deacylase from Geotalea uraniireducens (strain Rf4) (Geobacter uraniireducens).